A 431-amino-acid polypeptide reads, in one-letter code: TDP-daunosamine transferase DnrS (431 aa).

Residues 1-23 form the signal peptide; it reads MKVLVTAFAMDAHFNGVVPLAWA.

Belongs to the glycosyltransferase 28 family.

The catalysed reaction is dTDP-beta-L-daunosamine + epsilon-rhodomycinone = rhodomycin D + dTDP + H(+). Its pathway is antibiotic biosynthesis; daunorubicin biosynthesis. It participates in antibiotic biosynthesis; carminomycin biosynthesis. Functionally, involved in the biosynthesis of the anthracyclines carminomycin and daunorubicin (daunomycin) which are aromatic polyketide antibiotics that exhibit high cytotoxicity and are widely applied in the chemotherapy of a variety of cancers. Catalyzes the addition of the TDP activated glycoside, L-daunosamine-TDP (2,3,6-trideoxy-3-aminohexose-TDP) at position C-7 of epsilon-rhodomycinone to yield rhodomycin D. Glycosylation is a prerequisite for biological activity of anthracyclines and requires DnrQ which seems to act as an activator. The chain is TDP-daunosamine transferase DnrS (dnrS) from Streptomyces peucetius.